The primary structure comprises 358 residues: Alanine racemase (358 aa).

The active-site Proton acceptor; specific for D-alanine is K35. N6-(pyridoxal phosphate)lysine is present on K35. R130 lines the substrate pocket. Y255 serves as the catalytic Proton acceptor; specific for L-alanine. M303 lines the substrate pocket.

It belongs to the alanine racemase family. Pyridoxal 5'-phosphate serves as cofactor.

It catalyses the reaction L-alanine = D-alanine. Its pathway is amino-acid biosynthesis; D-alanine biosynthesis; D-alanine from L-alanine: step 1/1. In terms of biological role, catalyzes the interconversion of L-alanine and D-alanine. May also act on other amino acids. This is Alanine racemase (alr) from Shewanella oneidensis (strain ATCC 700550 / JCM 31522 / CIP 106686 / LMG 19005 / NCIMB 14063 / MR-1).